The sequence spans 554 residues: Phenylalanine--tRNA ligase beta subunit (554 aa).

Residues 276–351 (LTLKSRIISI…INYGYEKFEG (76 aa)) enclose the B5 domain. 4 residues coordinate Mg(2+): aspartate 329, aspartate 335, glutamate 338, and glutamate 339.

It belongs to the phenylalanyl-tRNA synthetase beta subunit family. Type 2 subfamily. Tetramer of two alpha and two beta subunits. The cofactor is Mg(2+).

The protein resides in the cytoplasm. The catalysed reaction is tRNA(Phe) + L-phenylalanine + ATP = L-phenylalanyl-tRNA(Phe) + AMP + diphosphate + H(+). In Methanococcus maripaludis (strain C7 / ATCC BAA-1331), this protein is Phenylalanine--tRNA ligase beta subunit.